We begin with the raw amino-acid sequence, 505 residues long: ATP synthase subunit beta (505 aa).

Positions 1–25 (MAKAATPKETAAVKKPAAPKKAATA) are disordered. Position 183 to 190 (183 to 190 (GGAGVGKT)) interacts with ATP.

It belongs to the ATPase alpha/beta chains family. F-type ATPases have 2 components, CF(1) - the catalytic core - and CF(0) - the membrane proton channel. CF(1) has five subunits: alpha(3), beta(3), gamma(1), delta(1), epsilon(1). CF(0) has three main subunits: a(1), b(2) and c(9-12). The alpha and beta chains form an alternating ring which encloses part of the gamma chain. CF(1) is attached to CF(0) by a central stalk formed by the gamma and epsilon chains, while a peripheral stalk is formed by the delta and b chains.

It localises to the cell inner membrane. It catalyses the reaction ATP + H2O + 4 H(+)(in) = ADP + phosphate + 5 H(+)(out). Produces ATP from ADP in the presence of a proton gradient across the membrane. The catalytic sites are hosted primarily by the beta subunits. The polypeptide is ATP synthase subunit beta (Sinorhizobium fredii (strain NBRC 101917 / NGR234)).